The chain runs to 15639 residues: FR901469 synthetase (15639 aa).

The Carrier 1 domain occupies 5 to 81 (HTSDGLRKLL…DLVDKIIEQQ (77 aa)). Ser-42 bears the O-(pantetheine 4'-phosphoryl)serine mark. Acidic residues predominate over residues 82 to 94 (LEEEEEDDDSLDN). The interval 82-105 (LEEEEEDDDSLDNESERDHSQKDL) is disordered. The interval 140–553 (PCLSMQEGCL…RDFLPLTEDD (414 aa)) is condensation 1. The segment at 579–971 (TISKQPDAVA…LGRRDTQVKI (393 aa)) is adenylation 1. Residues 1108–1184 (TPATAIEKEL…ELALVARSTT (77 aa)) enclose the Carrier 2 domain. Ser-1145 is modified (O-(pantetheine 4'-phosphoryl)serine). The segment at 1219–1626 (RSSNRFNQSV…TITHLVKRLA (408 aa)) is epimerase 1. The segment at 1667–2097 (EDVLPCTPIQ…LGNLSLLTNN (431 aa)) is condensation 2. Residues 2122-2518 (QEAAKEYTNA…GRRDNQIKIR (397 aa)) are adenylation 2. One can recognise a Carrier 3 domain in the interval 2654-2730 (VPATALEKQL…ELALKAKSTT (77 aa)). Residue Ser-2691 is modified to O-(pantetheine 4'-phosphoryl)serine. The interval 2761–3176 (VSAGEHRYNQ…TELLHRLEQM (416 aa)) is epimerase 2. The condensation 3 stretch occupies residues 3215–3640 (QDIYPCSPTQ…DDLIMMSPED (426 aa)). An adenylation 3 region spans residues 3669–4059 (TQPHAPAVAA…MGRIDSQIKI (391 aa)). The region spanning 4193–4269 (PPSNDAERMV…QLAAIVTQRG (77 aa)) is the Carrier 4 domain. An O-(pantetheine 4'-phosphoryl)serine modification is found at Ser-4230. Residues 4316–4714 (EDVYPCTPLQ…ILAHGTGLEE (399 aa)) form a condensation 4 region. The segment at 4756–5149 (TEAASTRPDA…GRLDTQAKLR (394 aa)) is adenylation 4. The Carrier 5 domain occupies 5284–5360 (EPATIMERQL…DLASHIDHHT (77 aa)). O-(pantetheine 4'-phosphoryl)serine is present on Ser-5321. The segment at 5402–5802 (EDIYPCTPLQ…TVFAQLCDSS (401 aa)) is condensation 5. Positions 5847–6238 (KYPNEPAVHA…LGRRDSQMKV (392 aa)) are adenylation 5. The region spanning 6375–6451 (QPSTTAEIKL…DMAKIVEEHV (77 aa)) is the Carrier 6 domain. Ser-6412 bears the O-(pantetheine 4'-phosphoryl)serine mark. The interval 6494 to 6889 (EDVYPATPLQ…RFAKVYQQLS (396 aa)) is condensation 6. The segment at 6952 to 7335 (WDGSMTYAEL…GRRDTQIKIR (384 aa)) is adenylation 6. The Carrier 7 domain maps to 7473-7546 (TAMEEQLRTV…QLALLASTDE (74 aa)). O-(pantetheine 4'-phosphoryl)serine is present on Ser-7507. The segment at 7580-7992 (MGENRYNQSV…SKTLEELTTQ (413 aa)) is epimerase 3. The tract at residues 8034 to 8459 (EDVFPASPMQ…QRMRNISLAS (426 aa)) is condensation 7. The adenylation 7 stretch occupies residues 8486–8882 (QKSVHARPDA…GRRDTQVKIR (397 aa)). In terms of domain architecture, Carrier 8 spans 9015–9091 (QPATDAERQL…DLAKTIQDSE (77 aa)). Residue Ser-9052 is modified to O-(pantetheine 4'-phosphoryl)serine. The tract at residues 9136-9535 (EDVYPCTPLQ…FAAIFRQLCD (400 aa)) is condensation 8. The adenylation 8 stretch occupies residues 9583–9974 (KNPHAIAVNA…GRRDNQMKIR (392 aa)). In terms of domain architecture, Carrier 9 spans 10110-10186 (EPATPMEMQL…GLAALIQKQI (77 aa)). Ser-10147 carries the post-translational modification O-(pantetheine 4'-phosphoryl)serine. A disordered region spans residues 10186 to 10208 (IDEEEEYDDSEEEEEDDEEEVRE). Residues 10187–10206 (DEEEEYDDSEEEEEDDEEEV) are compositionally biased toward acidic residues. The tract at residues 10240-10662 (VEDVYPCTPL…VLSETDKTKI (423 aa)) is condensation 9. Positions 10683–11082 (KQAIERPNAP…GRRDTQIKIR (400 aa)) are adenylation 9. The 77-residue stretch at 11217–11293 (EPATGMERHL…DLARETESQG (77 aa)) folds into the Carrier 10 domain. At Ser-11254 the chain carries O-(pantetheine 4'-phosphoryl)serine. The condensation 10 stretch occupies residues 11329-11725 (EDVYPCTPLQ…ETIFQQLSSV (397 aa)). An adenylation 10 region spans residues 11770–12165 (FKRTADKQPE…GRRDTQIKVR (396 aa)). Residues 12298–12374 (EPSTEMERRI…DLAAAVQGRI (77 aa)) enclose the Carrier 11 domain. An O-(pantetheine 4'-phosphoryl)serine modification is found at Ser-12335. The tract at residues 12418 to 12830 (EDVYPATPLQ…IQDIEMVSEQ (413 aa)) is condensation 11. The tract at residues 12861-13249 (SRADEIAICA…GRRDTQIKIR (389 aa)) is adenylation 11. A Carrier 12 domain is found at 13383 to 13459 (MPGTVQEEQL…QLGQKVKEAV (77 aa)). Position 13420 is an O-(pantetheine 4'-phosphoryl)serine (Ser-13420). The segment at 13476–13901 (APIQQMFFEQ…LKDMTSTLLQ (426 aa)) is epimerase 4. Positions 13940–14369 (EDILPCSPIQ…SIVGEHDLQQ (430 aa)) are condensation 12. The adenylation 12 stretch occupies residues 14390–14789 (RDAAHRTPDA…GRGDGQIKIR (400 aa)). A Carrier 13 domain is found at 14916–14992 (LPASADEGAL…DMASVASAAR (77 aa)). The residue at position 14953 (Ser-14953) is an O-(pantetheine 4'-phosphoryl)serine. The tract at residues 15062-15433 (QHAVDLAALK…DIMVRLASQQ (372 aa)) is condensation 13. Disordered regions lie at residues 15434 to 15511 (EGTV…ENRQ) and 15617 to 15639 (VQTNGHAGKGVTNGVNGGSKGHI). Residues 15455 to 15472 (NGTNGSNGDGTDAANGIG) show a composition bias toward low complexity. Positions 15482–15494 (AVEKSSGDAEVEK) are enriched in basic and acidic residues. Residues 15495 to 15511 (VSTNGHADNNTSAENRQ) show a composition bias toward polar residues.

Belongs to the NRP synthetase family.

It participates in antifungal biosynthesis. Nonribosomal peptide synthetase; part of the gene cluster that mediates the biosynthesis of the antifungal antibiotic FR901469, an inhibitor of beta-1,3-glucansynthase, exerting antifungal activity against the pathogenes Candida albicans and Aspergillus fumigatus. FR901469 is a cyclic depsipeptide containing 12 amino acid residues and a fatty acid chain. The NRPS frbI contains 12 modules responsible for the formation of the depsipeptide backbone which is denoted as Acyl-Thr-Ala-Tyr-Val-4OHPro-Thr-Thr-3OHPro-threo3OHGln-Gly-Thr-Orn-OH (C71H116N14O23). The PKS frbB is probably involved in the production of the hydrocarbon chain, and the acyl-CoA ligase frbC might be involved in the transport of the chain to the peptide ptoduct of frbI. Because FR901469 contains 3 hydroxylated amino acid residues, the 3 oxygenases frbA, frbH, and frbJ might be participating in amino acid hydroxylation. As no thioesterase domains were detected in frbI or frbB, the thioesterases frbD and frbE may instead release and cyclize the products of the NRPS and PKS, respectively. This chain is FR901469 synthetase, found in Dothideomycetidae sp. (strain 11243) (Fungal sp. (strain No.11243)).